A 292-amino-acid polypeptide reads, in one-letter code: Homoserine kinase (292 aa).

84 to 94 (PLARGMGSSSA) is an ATP binding site.

It belongs to the GHMP kinase family. Homoserine kinase subfamily.

The protein resides in the cytoplasm. It carries out the reaction L-homoserine + ATP = O-phospho-L-homoserine + ADP + H(+). The protein operates within amino-acid biosynthesis; L-threonine biosynthesis; L-threonine from L-aspartate: step 4/5. In terms of biological role, catalyzes the ATP-dependent phosphorylation of L-homoserine to L-homoserine phosphate. This is Homoserine kinase from Thermus thermophilus (strain ATCC BAA-163 / DSM 7039 / HB27).